The sequence spans 93 residues: MICAVYKSRRKVDSYLFVEKRNVFERVPDALMKMFGEPDLVMMLPLMKRDHLGFADINKVKSELAEKGYYLQLPPPKVNLLEQHKLEIGYSRD.

In terms of domain architecture, YcgL spans 1 to 85 (MICAVYKSRR…PKVNLLEQHK (85 aa)).

The sequence is that of YcgL domain-containing protein Ssed_2518 from Shewanella sediminis (strain HAW-EB3).